Consider the following 381-residue polypeptide: Meiotic recombination protein SPO11-1 (381 aa).

The Topo IIA-type catalytic domain occupies 23-162 (EEAATLLHRI…LNVVPVAKGL (140 aa)). The active-site O-(5'-phospho-DNA)-tyrosine intermediate is tyrosine 123. 2 residues coordinate Mg(2+): glutamate 209 and aspartate 261.

It belongs to the TOP6A family. The cofactor is Mg(2+). In terms of tissue distribution, highly expressed in flowers before pollination. Expressed in roots and shoots.

The protein resides in the nucleus. The catalysed reaction is ATP-dependent breakage, passage and rejoining of double-stranded DNA.. Functionally, required for meiotic recombination. Mediates DNA cleavage that forms the double-strand breaks (DSB) that initiate meiotic recombination. May be involved in plant growth and development, and stress tolerance. The sequence is that of Meiotic recombination protein SPO11-1 (SPO11-1) from Oryza sativa subsp. indica (Rice).